The chain runs to 118 residues: Ferredoxin-thioredoxin reductase, catalytic chain (118 aa).

A [4Fe-4S] cluster-binding site is contributed by cysteine 56. The active-site Nucleophile is the cysteine 58. A disulfide bridge connects residues cysteine 58 and cysteine 88. Residues cysteine 75, cysteine 77, and cysteine 86 each contribute to the [4Fe-4S] cluster site.

Belongs to the ferredoxin thioredoxin reductase beta subunit family. In terms of assembly, heterodimer of subunit A (variable subunit) and subunit B (catalytic subunit). Heterodimeric FTR forms a complex with ferredoxin and thioredoxin. It depends on [4Fe-4S] cluster as a cofactor.

The catalysed reaction is [thioredoxin]-disulfide + 2 reduced [2Fe-2S]-[ferredoxin] + 2 H(+) = [thioredoxin]-dithiol + 2 oxidized [2Fe-2S]-[ferredoxin]. In terms of biological role, catalytic subunit of the ferredoxin-thioredoxin reductase (FTR), which catalyzes the two-electron reduction of thioredoxins by the electrons provided by reduced ferredoxin. The sequence is that of Ferredoxin-thioredoxin reductase, catalytic chain from Synechocystis sp. (strain ATCC 27184 / PCC 6803 / Kazusa).